Here is a 403-residue protein sequence, read N- to C-terminus: L-alanine/L-glutamate racemase (403 aa).

Residues 62-64 (YSN), 92-93 (GL), and 209-211 (AVT) contribute to the pyridoxal 5'-phosphate site. Lys212 bears the N6-(pyridoxal phosphate)lysine mark.

It belongs to the trans-sulfuration enzymes family. In terms of assembly, homotetramer; dimer of active dimers. It depends on pyridoxal 5'-phosphate as a cofactor.

It catalyses the reaction L-alanine = D-alanine. The enzyme catalyses L-glutamate = D-glutamate. It carries out the reaction L,L-cystathionine + H2O = L-homocysteine + pyruvate + NH4(+). It participates in cell wall biogenesis; peptidoglycan biosynthesis. Functionally, catalyzes the racemization of L-alanine to D-alanine, and of L-glutamate to D-glutamate. The activity is low, but likely physiological since W.pipientis wMel lacks canonical alr and murI genes, while D-alanine and D-glutamate are essential components of peptidoglycan. Also displays a vestigial cystathionine beta-lyase (CBL) activity, cleaving cystathionine to homocysteine and pyruvate; however, this reaction seems not to be physiologically relevant since the only met gene in the genome of this obligately intracellular parasitic bacterium is metC, demonstrating that it is a methionine auxotroph. This is L-alanine/L-glutamate racemase from Wolbachia pipientis wMel.